Consider the following 507-residue polypeptide: NAD(P)H-quinone oxidoreductase chain 4, chloroplastic (507 aa).

15 helical membrane passes run 4–24 (FPWLTIIVVFPILTGSLIFLL), 37–57 (LCICILELLLTTYTFCYHFQL), 87–107 (IGPILLTGFITTLATLAAWPV), 111–131 (AQLFHFLMLAMYSGQIGSFSS), 134–154 (LLLFFLMWEFELIPVYLLLSM), 167–187 (FILYTAGGSIFLLIGVLGIGL), 208–228 (ALEVIFYVGFLIAFAVKLPII), 242–262 (HYSTCMLLAGILLKMGAYGLV), 272–292 (AHCLFSPGLIIVGAIQIIYAA), 305–325 (IAYSSISHMGFIIIGIGSLSD), 330–350 (GAILQIISHGFIGAALFFLAG), 386–406 (LALPGLSGFVAELLVFFGIIT), 416–436 (ILIAFLMAIGMILTPIYSLSM), 462–482 (LFVSISLLLPIIGIGIYPDFV), and 483–503 (LSLSVEKVEAIISHFFFSIVF).

The protein belongs to the complex I subunit 4 family.

The protein resides in the plastid. Its subcellular location is the chloroplast thylakoid membrane. The catalysed reaction is a plastoquinone + NADH + (n+1) H(+)(in) = a plastoquinol + NAD(+) + n H(+)(out). It carries out the reaction a plastoquinone + NADPH + (n+1) H(+)(in) = a plastoquinol + NADP(+) + n H(+)(out). The sequence is that of NAD(P)H-quinone oxidoreductase chain 4, chloroplastic (ndhD) from Oenothera elata subsp. hookeri (Hooker's evening primrose).